A 456-amino-acid polypeptide reads, in one-letter code: Exodeoxyribonuclease 7 large subunit (456 aa).

The protein belongs to the XseA family. In terms of assembly, heterooligomer composed of large and small subunits.

The protein localises to the cytoplasm. The enzyme catalyses Exonucleolytic cleavage in either 5'- to 3'- or 3'- to 5'-direction to yield nucleoside 5'-phosphates.. In terms of biological role, bidirectionally degrades single-stranded DNA into large acid-insoluble oligonucleotides, which are then degraded further into small acid-soluble oligonucleotides. This is Exodeoxyribonuclease 7 large subunit from Lactobacillus johnsonii (strain CNCM I-12250 / La1 / NCC 533).